We begin with the raw amino-acid sequence, 1579 residues long: Pentafunctional AROM polypeptide (1579 aa).

Positions 1–383 are 3-dehydroquinate synthase; it reads MLVKVPILGR…YGKSAHVVSD (383 aa). Residues 40-42, 75-78, 106-108, and Asp111 contribute to the NAD(+) site; these read DSN, EANK, and GGI. Arg122 is a binding site for 7-phospho-2-dehydro-3-deoxy-D-arabino-heptonate. Position 131-132 (131-132) interacts with NAD(+); that stretch reads TS. 7-phospho-2-dehydro-3-deoxy-D-arabino-heptonate contacts are provided by Asp138 and Lys144. Residue Lys153 participates in NAD(+) binding. 7-phospho-2-dehydro-3-deoxy-D-arabino-heptonate is bound at residue Asn154. Residues 171–174 and Asn182 each bind NAD(+); that span reads WLQS. Residue Glu186 coordinates Zn(2+). 7-phospho-2-dehydro-3-deoxy-D-arabino-heptonate-binding positions include 186–189 and Lys249; that span reads EVIK. The Proton acceptor; for 3-dehydroquinate synthase activity role is filled by Glu259. 7-phospho-2-dehydro-3-deoxy-D-arabino-heptonate is bound by residues 263–267 and His270; that span reads RNLLN. Position 270 (His270) interacts with Zn(2+). Catalysis depends on His274, which acts as the Proton acceptor; for 3-dehydroquinate synthase activity. Residues His286 and Lys355 each contribute to the 7-phospho-2-dehydro-3-deoxy-D-arabino-heptonate site. His286 provides a ligand contact to Zn(2+). Residues 396–862 form an EPSP synthase region; sequence VYPFNNIPRD…WDVLHTELGA (467 aa). Cys844 serves as the catalytic For EPSP synthase activity. Residues 881 to 1071 are shikimate kinase; sequence SVVIIGMRAA…IPTRRSAFVC (191 aa). 886–893 is an ATP binding site; it reads GMRAAGKT. The tract at residues 1072–1284 is 3-dehydroquinase; it reads LTFENLTEYT…AAPGQLTVAE (213 aa). Catalysis depends on His1189, which acts as the Proton acceptor; for 3-dehydroquinate dehydratase activity. Lys1218 serves as the catalytic Schiff-base intermediate with substrate; for 3-dehydroquinate dehydratase activity. A shikimate dehydrogenase region spans residues 1297-1579; the sequence is KKDFFVVGSP…KAIYDAVTEI (283 aa).

The protein in the N-terminal section; belongs to the sugar phosphate cyclases superfamily. Dehydroquinate synthase family. It in the 2nd section; belongs to the EPSP synthase family. This sequence in the 3rd section; belongs to the shikimate kinase family. In the 4th section; belongs to the type-I 3-dehydroquinase family. The protein in the C-terminal section; belongs to the shikimate dehydrogenase family. In terms of assembly, homodimer. Zn(2+) serves as cofactor.

The protein resides in the cytoplasm. The enzyme catalyses 7-phospho-2-dehydro-3-deoxy-D-arabino-heptonate = 3-dehydroquinate + phosphate. The catalysed reaction is 3-dehydroquinate = 3-dehydroshikimate + H2O. It catalyses the reaction shikimate + NADP(+) = 3-dehydroshikimate + NADPH + H(+). It carries out the reaction shikimate + ATP = 3-phosphoshikimate + ADP + H(+). The enzyme catalyses 3-phosphoshikimate + phosphoenolpyruvate = 5-O-(1-carboxyvinyl)-3-phosphoshikimate + phosphate. It functions in the pathway metabolic intermediate biosynthesis; chorismate biosynthesis; chorismate from D-erythrose 4-phosphate and phosphoenolpyruvate: step 2/7. Its pathway is metabolic intermediate biosynthesis; chorismate biosynthesis; chorismate from D-erythrose 4-phosphate and phosphoenolpyruvate: step 3/7. It participates in metabolic intermediate biosynthesis; chorismate biosynthesis; chorismate from D-erythrose 4-phosphate and phosphoenolpyruvate: step 4/7. The protein operates within metabolic intermediate biosynthesis; chorismate biosynthesis; chorismate from D-erythrose 4-phosphate and phosphoenolpyruvate: step 5/7. It functions in the pathway metabolic intermediate biosynthesis; chorismate biosynthesis; chorismate from D-erythrose 4-phosphate and phosphoenolpyruvate: step 6/7. Functionally, the AROM polypeptide catalyzes 5 consecutive enzymatic reactions in prechorismate polyaromatic amino acid biosynthesis. In Candida glabrata (strain ATCC 2001 / BCRC 20586 / JCM 3761 / NBRC 0622 / NRRL Y-65 / CBS 138) (Yeast), this protein is Pentafunctional AROM polypeptide.